Here is a 152-residue protein sequence, read N- to C-terminus: Xanthine-guanine phosphoribosyltransferase (152 aa).

Residues 37–38, R69, and 88–96 contribute to the 5-phospho-alpha-D-ribose 1-diphosphate site; these read RG and DDLVDTGGT. R69 contacts GMP. D89 contacts Mg(2+). Guanine contacts are provided by D92 and I135. Positions 92 and 135 each coordinate xanthine. Residues 92–96 and 134–135 contribute to the GMP site; these read DTGGT and WI.

Belongs to the purine/pyrimidine phosphoribosyltransferase family. XGPT subfamily. As to quaternary structure, homotetramer. Requires Mg(2+) as cofactor.

The protein localises to the cell inner membrane. The catalysed reaction is GMP + diphosphate = guanine + 5-phospho-alpha-D-ribose 1-diphosphate. It carries out the reaction XMP + diphosphate = xanthine + 5-phospho-alpha-D-ribose 1-diphosphate. The enzyme catalyses IMP + diphosphate = hypoxanthine + 5-phospho-alpha-D-ribose 1-diphosphate. Its pathway is purine metabolism; GMP biosynthesis via salvage pathway; GMP from guanine: step 1/1. It functions in the pathway purine metabolism; XMP biosynthesis via salvage pathway; XMP from xanthine: step 1/1. Purine salvage pathway enzyme that catalyzes the transfer of the ribosyl-5-phosphate group from 5-phospho-alpha-D-ribose 1-diphosphate (PRPP) to the N9 position of the 6-oxopurines guanine and xanthine to form the corresponding ribonucleotides GMP (guanosine 5'-monophosphate) and XMP (xanthosine 5'-monophosphate), with the release of PPi. To a lesser extent, also acts on hypoxanthine. The sequence is that of Xanthine-guanine phosphoribosyltransferase from Shigella boydii serotype 18 (strain CDC 3083-94 / BS512).